The chain runs to 431 residues: E3 ubiquitin-protein ligase RNF128 (431 aa).

The signal sequence occupies residues 1-38 (MGQLPGAGVFCRGGCGFSRLLAWCFLLVLSPQTPGSRG). Residues Asn48, Asn59, and Asn101 are each glycosylated (N-linked (GlcNAc...) asparagine). The PA domain occupies 75 to 186 (SPLEPVAGVL…LKGTKILQSI (112 aa)). A helical transmembrane segment spans residues 211–231 (IFFVSVSFFIITAATVGYFIF). An RING-type; atypical zinc finger spans residues 280–321 (CAVCIELYKPNDLVRILTCNHVFHKTCVDPWLLEHRTCPMCK). The span at 345-354 (VSNETSSNAS) shows a compositional bias: polar residues. Residues 345-431 (VSNETSSNAS…QETTVREIKS (87 aa)) are disordered.

Auto-ubiquitinated. Controls the development of T-cell clonal anergy by ubiquitination.

The protein resides in the cytoplasm. It localises to the endomembrane system. It is found in the cytoskeleton. Its subcellular location is the perinuclear region. It catalyses the reaction S-ubiquitinyl-[E2 ubiquitin-conjugating enzyme]-L-cysteine + [acceptor protein]-L-lysine = [E2 ubiquitin-conjugating enzyme]-L-cysteine + N(6)-ubiquitinyl-[acceptor protein]-L-lysine.. It participates in protein modification; protein ubiquitination. In terms of biological role, E3 ubiquitin-protein ligase that catalyzes 'Lys-27', 'Lys-48'- or 'Lys-63'-linked polyubiquitin chains formation and plays a role in different biological processes such as modulation of immune response, cytoskeletal dynamics or protein homeostasis. Inhibits IL2 and IL4 transcription, thereby playing an important role in the induction of the anergic phenotype, a long-term stable state of T-lymphocyte unresponsiveness to antigenic stimulation associated with the blockade of interleukin production. Ubiquitinates ARPC5 with 'Lys-48' linkages and COR1A with 'Lys-63' linkages leading to their degradation, down-regulation of these cytoskeletal components results in impaired lamellipodium formation and reduced accumulation of F-actin at the immunological synapse. Functions in the patterning of the dorsal ectoderm; sensitizes ectoderm to respond to neural-inducing signals. Plays a positive role in innate immune response by promoting 'Lys-63'-linked ubiquitination of TBK1 after RNA- or DNA-virus infection. Regulates alveolar macrophage activation and neutrophil infiltration by interacting with TLR4, targeting it for degradation, and inhibiting NF-kappa-B activation, hence decreasing pro-inflammatory cytokines. Negatively regulates the IL-3/STAT5 signaling pathway by facilitating 'Lys-27'-linked polyubiquitination of IL3RA leading to its degradation via lysosomal pathway. Directly regulates the N-glycosylation process in the endoplasmic reticulum by targeting the glycosyl-transferase RPN1 for ubiquitination and degradation. Other substrates targeted for degradation by RNF128 include transmembrane proteins CD40L, CD83 or the tetraspanin CD151. This Bos taurus (Bovine) protein is E3 ubiquitin-protein ligase RNF128 (RNF128).